The primary structure comprises 114 residues: Large ribosomal subunit protein bL20c (114 aa).

It belongs to the bacterial ribosomal protein bL20 family.

The protein resides in the plastid. It is found in the cyanelle. Binds directly to 23S ribosomal RNA and is necessary for the in vitro assembly process of the 50S ribosomal subunit. It is not involved in the protein synthesizing functions of that subunit. The polypeptide is Large ribosomal subunit protein bL20c (rpl20) (Cyanophora paradoxa).